Reading from the N-terminus, the 338-residue chain is Phenylalanine--tRNA ligase alpha subunit (338 aa).

E252 is a Mg(2+) binding site.

This sequence belongs to the class-II aminoacyl-tRNA synthetase family. Phe-tRNA synthetase alpha subunit type 1 subfamily. In terms of assembly, tetramer of two alpha and two beta subunits. Requires Mg(2+) as cofactor.

It is found in the cytoplasm. The enzyme catalyses tRNA(Phe) + L-phenylalanine + ATP = L-phenylalanyl-tRNA(Phe) + AMP + diphosphate + H(+). This Pseudomonas entomophila (strain L48) protein is Phenylalanine--tRNA ligase alpha subunit.